Consider the following 305-residue polypeptide: Autophagy-related protein 27 (305 aa).

The signal sequence occupies residues M1–A22. The Lumenal segment spans residues E23–H242. The MRH domain occupies L24–N231. 2 disulfides stabilise this stretch: C26–C66 and C74–C81. N-linked (GlcNAc...) asparagine glycosylation is present at N58. A glycan (N-linked (GlcNAc...) asparagine) is linked at N85. Cysteines 156 and 229 form a disulfide. Residues L163–E202 form a disordered region. Residues W243–S263 traverse the membrane as a helical segment. At E264–Q305 the chain is on the cytoplasmic side.

The protein belongs to the ATG27 family.

The protein resides in the cytoplasmic vesicle membrane. Its subcellular location is the golgi apparatus membrane. The protein localises to the mitochondrion membrane. It is found in the preautophagosomal structure membrane. Functionally, effector of phosphatidylinositol 3-phosphate kinase signaling. Regulates the cytoplasm to vacuole transport (Cvt) vesicle formation. Plays a role in ATG protein retrieval from the pre-autophagosomal structure (PAS). The protein is Autophagy-related protein 27 of Arthroderma benhamiae (strain ATCC MYA-4681 / CBS 112371) (Trichophyton mentagrophytes).